Reading from the N-terminus, the 210-residue chain is Orotate phosphoribosyltransferase (210 aa).

5-phospho-alpha-D-ribose 1-diphosphate contacts are provided by residues Arg-94, Lys-98, His-100, and 120–128 (EDLISTGGS). An orotate-binding site is contributed by Ser-124.

Belongs to the purine/pyrimidine phosphoribosyltransferase family. PyrE subfamily. In terms of assembly, homodimer. Requires Mg(2+) as cofactor.

The catalysed reaction is orotidine 5'-phosphate + diphosphate = orotate + 5-phospho-alpha-D-ribose 1-diphosphate. Its pathway is pyrimidine metabolism; UMP biosynthesis via de novo pathway; UMP from orotate: step 1/2. In terms of biological role, catalyzes the transfer of a ribosyl phosphate group from 5-phosphoribose 1-diphosphate to orotate, leading to the formation of orotidine monophosphate (OMP). The polypeptide is Orotate phosphoribosyltransferase (Bacillus cereus (strain G9842)).